The chain runs to 124 residues: Large ribosomal subunit protein bL12 (124 aa).

Positions 93 to 124 are disordered; the sequence is GAPSTVKEGASKDEAEEAKKKLEEAGASVELK. Over residues 101–116 the composition is skewed to basic and acidic residues; it reads GASKDEAEEAKKKLEE.

The protein belongs to the bacterial ribosomal protein bL12 family. In terms of assembly, homodimer. Part of the ribosomal stalk of the 50S ribosomal subunit. Forms a multimeric L10(L12)X complex, where L10 forms an elongated spine to which 2 to 4 L12 dimers bind in a sequential fashion. Binds GTP-bound translation factors.

Forms part of the ribosomal stalk which helps the ribosome interact with GTP-bound translation factors. Is thus essential for accurate translation. This chain is Large ribosomal subunit protein bL12, found in Marinobacter nauticus (strain ATCC 700491 / DSM 11845 / VT8) (Marinobacter aquaeolei).